Reading from the N-terminus, the 113-residue chain is uncharacterized protein (113 aa).

It to M.jannaschii MJ0886 C-terminal region.

This is an uncharacterized protein from Clostridium pasteurianum.